The primary structure comprises 195 residues: Coiled-coil domain-containing protein 184 (195 aa).

A coiled-coil region spans residues 39–68 (GMKELMEHLKAQLQALFEDVRAMRGALDEQ). The interval 98 to 175 (RQGGLGVVGN…AGLLGGDGPL (78 aa)) is disordered. The segment covering 135-146 (PEDEEDDDEEEK) has biased composition (acidic residues).

This Bos taurus (Bovine) protein is Coiled-coil domain-containing protein 184 (CCDC184).